The sequence spans 211 residues: UPF0319 protein VC_A0026 (211 aa).

The first 21 residues, 1 to 21 (MKPMQRLTCLLALCFAASASA), serve as a signal peptide directing secretion.

Belongs to the UPF0319 family.

The protein is UPF0319 protein VC_A0026 of Vibrio cholerae serotype O1 (strain ATCC 39315 / El Tor Inaba N16961).